A 279-amino-acid chain; its full sequence is Large ribosomal subunit protein uL2 (279 aa).

Disordered stretches follow at residues 34–55 (LAPLKKSGGRNRAGRITSRHKG) and 221–279 (RGMA…RKAK). Residues 40 to 55 (SGGRNRAGRITSRHKG) are compositionally biased toward basic residues. The segment covering 232-242 (MGGGEGRSKSG) has biased composition (gly residues). A compositionally biased stretch (basic residues) spans 259-279 (LKTRNKKKASSKLIVRGRKAK).

Belongs to the universal ribosomal protein uL2 family. As to quaternary structure, part of the 50S ribosomal subunit. Forms a bridge to the 30S subunit in the 70S ribosome.

Its function is as follows. One of the primary rRNA binding proteins. Required for association of the 30S and 50S subunits to form the 70S ribosome, for tRNA binding and peptide bond formation. It has been suggested to have peptidyltransferase activity; this is somewhat controversial. Makes several contacts with the 16S rRNA in the 70S ribosome. This Chlorobium phaeobacteroides (strain BS1) protein is Large ribosomal subunit protein uL2.